Consider the following 401-residue polypeptide: Phosphoglycerate kinase (401 aa).

Substrate is bound by residues 20–22, R35, 58–61, R117, and R154; these read DFN and HLGR. Residues K204, G298, E329, and 358–361 contribute to the ATP site; that span reads GGDS.

This sequence belongs to the phosphoglycerate kinase family. Monomer.

Its subcellular location is the cytoplasm. The catalysed reaction is (2R)-3-phosphoglycerate + ATP = (2R)-3-phospho-glyceroyl phosphate + ADP. It participates in carbohydrate degradation; glycolysis; pyruvate from D-glyceraldehyde 3-phosphate: step 2/5. The chain is Phosphoglycerate kinase from Bifidobacterium longum subsp. infantis (strain ATCC 15697 / DSM 20088 / JCM 1222 / NCTC 11817 / S12).